Reading from the N-terminus, the 480-residue chain is MSANTISTKVQSKDLNGLSLIAAHSHISGLGLDDNLQPKESGQGMVGQLKARKAAGVILKMIQAGKIAGRAVLVAGPPSTGKTAIAMGLSQNLGSEVPFTAIAGSEIFSLELSKTESLTQAFRKSIGIKIKEETEMIEGEVVEIQIDRSITGGHKQGKLTIKTTDMETIYELGNKMIEGLTKEKVLAGDVISIDKASGKITKLGKSFTRARDYDAMGPETKFVQCPEGELQKRKEVVHTVSLHEIDVINSRQQGFLALFSGDTGEIRSEVRDQINTKVAEWKEEGKAEIVPGVLFIDEVHMLDIECFSFINRALEDDFAPIVIMATNRGISKTRGTNYKSPHGLPMDLLDRSIIIHTAPYNADEIRTILLIRATEEEVELTGDALALLTKIGQETSLRYASNLISVSQQIALKRRSNSVDLPDIKRSYMLFLDSDRSVQYLEEFSTQFIDDSGNVTFGTNDASVKQTKGAANGEDKMETD.

An ATP-binding site is contributed by 76 to 83; sequence GPPSTGKT.

This sequence belongs to the RuvB family. In terms of assembly, may form heterododecamers with RVB1. Component of the SWR1 chromatin remodeling complex, the INO80 chromatin remodeling complex, and of the R2TP complex.

The protein localises to the nucleus. It carries out the reaction ATP + H2O = ADP + phosphate + H(+). Its function is as follows. DNA helicase which participates in several chromatin remodeling complexes, including the SWR1 and the INO80 complexes. The SWR1 complex mediates the ATP-dependent exchange of histone H2A for the H2A variant HZT1 leading to transcriptional regulation of selected genes by chromatin remodeling. The INO80 complex remodels chromatin by shifting nucleosomes and is involved in DNA repair. Also involved in pre-rRNA processing. The sequence is that of RuvB-like helicase 2 (RVB2) from Debaryomyces hansenii (strain ATCC 36239 / CBS 767 / BCRC 21394 / JCM 1990 / NBRC 0083 / IGC 2968) (Yeast).